The sequence spans 189 residues: Peptidyl-tRNA hydrolase (189 aa).

Residue Tyr-17 coordinates tRNA. His-22 functions as the Proton acceptor in the catalytic mechanism. TRNA contacts are provided by Phe-65, Asn-67, and Asn-113.

It belongs to the PTH family. Monomer.

It localises to the cytoplasm. It catalyses the reaction an N-acyl-L-alpha-aminoacyl-tRNA + H2O = an N-acyl-L-amino acid + a tRNA + H(+). Its function is as follows. Hydrolyzes ribosome-free peptidyl-tRNAs (with 1 or more amino acids incorporated), which drop off the ribosome during protein synthesis, or as a result of ribosome stalling. In terms of biological role, catalyzes the release of premature peptidyl moieties from peptidyl-tRNA molecules trapped in stalled 50S ribosomal subunits, and thus maintains levels of free tRNAs and 50S ribosomes. The polypeptide is Peptidyl-tRNA hydrolase (Mycoplasma genitalium (strain ATCC 33530 / DSM 19775 / NCTC 10195 / G37) (Mycoplasmoides genitalium)).